A 332-amino-acid chain; its full sequence is Ectoine dioxygenase (332 aa).

Positions 1-10 are enriched in polar residues; it reads MSVQTSSNRP. The interval 1–47 is disordered; that stretch reads MSVQTSSNRPLPQANLHIATETPEADSRIRSAPRPGQDPYPTRLSEP. Gln163 serves as a coordination point for L-ectoine. Residue Lys169 coordinates 2-oxoglutarate. Fe cation contacts are provided by His180, Asp182, and His281.

Belongs to the PhyH family. EctD subfamily. As to quaternary structure, homodimer. The cofactor is Fe(2+).

The catalysed reaction is L-ectoine + 2-oxoglutarate + O2 = 5-hydroxyectoine + succinate + CO2. Functionally, involved in the biosynthesis of 5-hydroxyectoine, called compatible solute, which helps organisms to survive extreme osmotic stress by acting as a highly soluble organic osmolyte. Catalyzes the 2-oxoglutarate-dependent selective hydroxylation of L-ectoine to yield (4S,5S)-5-hydroxyectoine. In Halomonas elongata (strain ATCC 33173 / DSM 2581 / NBRC 15536 / NCIMB 2198 / 1H9), this protein is Ectoine dioxygenase.